Consider the following 497-residue polypeptide: Glycerol kinase (497 aa).

ADP is bound at residue Thr-12. 3 residues coordinate ATP: Thr-12, Thr-13, and Ser-14. Thr-12 provides a ligand contact to sn-glycerol 3-phosphate. Arg-16 contacts ADP. 4 residues coordinate sn-glycerol 3-phosphate: Arg-82, Glu-83, Tyr-134, and Asp-243. Residues Arg-82, Glu-83, Tyr-134, Asp-243, and Gln-244 each coordinate glycerol. Residues Thr-265 and Gly-308 each coordinate ADP. 4 residues coordinate ATP: Thr-265, Gly-308, Gln-312, and Gly-411. Gly-411 contributes to the ADP binding site.

The protein belongs to the FGGY kinase family.

It carries out the reaction glycerol + ATP = sn-glycerol 3-phosphate + ADP + H(+). The protein operates within polyol metabolism; glycerol degradation via glycerol kinase pathway; sn-glycerol 3-phosphate from glycerol: step 1/1. Inhibited by fructose 1,6-bisphosphate (FBP). Functionally, key enzyme in the regulation of glycerol uptake and metabolism. Catalyzes the phosphorylation of glycerol to yield sn-glycerol 3-phosphate. This is Glycerol kinase from Allorhizobium ampelinum (strain ATCC BAA-846 / DSM 112012 / S4) (Agrobacterium vitis (strain S4)).